We begin with the raw amino-acid sequence, 781 residues long: Serine/threonine-protein kinase PLK4 (781 aa).

The Protein kinase domain occupies 14–268 (YEVQHLLGKG…LEQVLRHPFM (255 aa)). Residues 20–28 (LGKGGFACV) and lysine 43 contribute to the ATP site. Aspartate 139 (proton acceptor) is an active-site residue. Residues 397 to 514 (TEHISVPPLN…ARFVGLVKSK (118 aa)) enclose the Cryptic POLO box 1 (CPB1) domain. Residues 463 to 486 (QPDPGRGLPIQEQTSETHSSGTDN) form a disordered region. Residues 473-486 (QEQTSETHSSGTDN) are compositionally biased toward polar residues. The 104-residue stretch at 515–618 (TPKVTYFSAL…GRRPVVEVLP (104 aa)) folds into the Cryptic POLO box 2 (CPB2) domain. The POLO box domain occupies 672-751 (PIKRLNVPGV…LPQVQMKLRC (80 aa)).

Belongs to the protein kinase superfamily. Ser/Thr protein kinase family. CDC5/Polo subfamily. In terms of assembly, homodimer. Post-translationally, ubiquitinated by the SCF(Slimb) ubiquitin ligase complex; leading to its degradation by the proteasome during interphase and regulating centriole number and ensuring the block to centriole reduplication.

The protein resides in the cytoplasm. Its subcellular location is the cytoskeleton. It localises to the microtubule organizing center. It is found in the centrosome. The protein localises to the centriole. It catalyses the reaction L-seryl-[protein] + ATP = O-phospho-L-seryl-[protein] + ADP + H(+). The enzyme catalyses L-threonyl-[protein] + ATP = O-phospho-L-threonyl-[protein] + ADP + H(+). In terms of biological role, serine/threonine-protein kinase that plays a central role in centriole duplication. Able to trigger procentriole formation on the surface of the mother centriole cylinder, using mother centriole as a platform, leading to the recruitment of centriole biogenesis proteins such as sas-6. When overexpressed, it is able to induce centrosome amplification through the simultaneous generation of multiple procentrioles adjoining each parental centriole during S phase. Centrosome amplification following overexpression can initiate tumorigenesis, highlighting the importance of centrosome regulation in cancers. This Drosophila virilis (Fruit fly) protein is Serine/threonine-protein kinase PLK4 (SAK).